A 168-amino-acid chain; its full sequence is Cyclin-dependent kinase 4 inhibitor C (168 aa).

ANK repeat units lie at residues 4–33 (PWGN…NVNA), 37–65 (FGRT…NPNL), 69–98 (TGFA…DVNI), 102–132 (EGNL…NVGH), and 136–165 (KGDT…GGAT).

This sequence belongs to the CDKN2 cyclin-dependent kinase inhibitor family. Heterodimer of p18 with CDK6.

Its function is as follows. Interacts strongly with CDK6, weakly with CDK4. Inhibits cell growth and proliferation with a correlated dependence on endogenous retinoblastoma protein RB. This chain is Cyclin-dependent kinase 4 inhibitor C (Cdkn2c), found in Mus musculus (Mouse).